We begin with the raw amino-acid sequence, 607 residues long: UvrABC system protein C (607 aa).

The GIY-YIG domain maps to glycine 16 to isoleucine 94. The UVR domain occupies asparagine 203 to valine 238.

Belongs to the UvrC family. Interacts with UvrB in an incision complex.

The protein localises to the cytoplasm. Its function is as follows. The UvrABC repair system catalyzes the recognition and processing of DNA lesions. UvrC both incises the 5' and 3' sides of the lesion. The N-terminal half is responsible for the 3' incision and the C-terminal half is responsible for the 5' incision. In Pseudomonas savastanoi pv. phaseolicola (strain 1448A / Race 6) (Pseudomonas syringae pv. phaseolicola (strain 1448A / Race 6)), this protein is UvrABC system protein C.